A 432-amino-acid polypeptide reads, in one-letter code: Keratin, type I cytoskeletal 17 (432 aa).

The segment at 1 to 24 (MTTSIRQFTSSSSIKGSSGLGGGS) is disordered. The tract at residues 1 to 83 (MTTSIRQFTS…GGVDGLLAGG (83 aa)) is head. Phosphoserine is present on residues serine 12 and serine 13. Lysine 15 participates in a covalent cross-link: Glycyl lysine isopeptide (Lys-Gly) (interchain with G-Cter in SUMO1); alternate. Lysine 15 is covalently cross-linked (Glycyl lysine isopeptide (Lys-Gly) (interchain with G-Cter in SUMO2); alternate). Serine 25, serine 32, and serine 39 each carry phosphoserine. A Phosphoserine; by RPS6KA1 modification is found at serine 44. Residues 84 to 120 (EKATMQNLNDRLASYLDKVRALEEANTELEVKIRDWY) are coil 1A. In terms of domain architecture, IF rod spans 84 to 395 (EKATMQNLND…RLLEGEDAHL (312 aa)). The peptide epitope S1; induces T-cell and keratinocyte proliferation and IFN-gamma production stretch occupies residues 102–116 (VRALEEANTELEVKI). Threonine 110 is modified (phosphothreonine). The segment at 121–138 (QRQAPGPARDYSQYYRTI) is linker 1. The tract at residues 139 to 230 (EELQNKILTA…NHEEEMNALR (92 aa)) is coil 1B. Residues 153–167 (ANILLQIDNARLAAD) form a peptide epitope S2; induces T-cell proliferation and IFN-gamma production region. Residues 231 to 250 (GQVGGEINVEMDAAPGVDLS) form a linker 12 region. Residues 251 to 392 (RILNEMRDQY…TYRRLLEGED (142 aa)) are coil 2. Lysine 278 participates in a covalent cross-link: Glycyl lysine isopeptide (Lys-Gly) (interchain with G-Cter in SUMO2). Threonine 279 bears the Phosphothreonine mark. Serine 323 bears the Phosphoserine mark. Positions 332–346 (ENRYCVQLSQIQGLI) are peptide epitope S4; induces T-cell and keratinocyte proliferation and IFN-gamma production. The segment at 393–432 (AHLTQYKKEPVTTRQVRTIVEEVQDGKVISSREQVHQTTR) is tail. Residues lysine 399, lysine 400, and lysine 419 each participate in a glycyl lysine isopeptide (Lys-Gly) (interchain with G-Cter in SUMO1); alternate cross-link. Glycyl lysine isopeptide (Lys-Gly) (interchain with G-Cter in SUMO2); alternate cross-links involve residues lysine 399, lysine 400, and lysine 419.

Belongs to the intermediate filament family. In terms of assembly, heterodimer of a type I and a type II keratin. KRT17 associates with KRT6 isomers (KRT6A or KRT6B). Interacts with TRADD and SFN. Post-translationally, phosphorylation at Ser-44 occurs in a growth- and stress-dependent fashion in skin keratinocytes, it has no effect on filament organization. As to expression, expressed in the outer root sheath and medulla region of hair follicle specifically from eyebrow and beard, digital pulp, nail matrix and nail bed epithelium, mucosal stratified squamous epithelia and in basal cells of oral epithelium, palmoplantar epidermis and sweat and mammary glands. Also expressed in myoepithelium of prostate, basal layer of urinary bladder, cambial cells of sebaceous gland and in exocervix (at protein level).

It is found in the cytoplasm. Type I keratin involved in the formation and maintenance of various skin appendages, specifically in determining shape and orientation of hair. Required for the correct growth of hair follicles, in particular for the persistence of the anagen (growth) state. Modulates the function of TNF-alpha in the specific context of hair cycling. Regulates protein synthesis and epithelial cell growth through binding to the adapter protein SFN and by stimulating Akt/mTOR pathway. Involved in tissue repair. May be a marker of basal cell differentiation in complex epithelia and therefore indicative of a certain type of epithelial 'stem cells'. Acts as a promoter of epithelial proliferation by acting a regulator of immune response in skin: promotes Th1/Th17-dominated immune environment contributing to the development of basaloid skin tumors. May act as an autoantigen in the immunopathogenesis of psoriasis, with certain peptide regions being a major target for autoreactive T-cells and hence causing their proliferation. This chain is Keratin, type I cytoskeletal 17 (KRT17), found in Homo sapiens (Human).